The sequence spans 210 residues: Probable high-affinity nitrate transporter-activating protein 2.2 (210 aa).

The signal sequence occupies residues 1–23 (MARFGAVIHRVFLPLLLLLVVLG). Residues 182–202 (IEVAAGVLSAFSVAALAVFLV) form a helical membrane-spanning segment.

The protein belongs to the NAR2 family.

It localises to the cell membrane. Its function is as follows. Involved in nitrate transport. The polypeptide is Probable high-affinity nitrate transporter-activating protein 2.2 (NAR2.2) (Oryza sativa subsp. japonica (Rice)).